The chain runs to 216 residues: Small ribosomal subunit protein uS3c (216 aa).

The KH type-2 domain occupies 43–118 (IKNYIQKNRR…KLNIAIVKVT (76 aa)).

The protein belongs to the universal ribosomal protein uS3 family. As to quaternary structure, part of the 30S ribosomal subunit.

The protein resides in the plastid. It localises to the chloroplast. The sequence is that of Small ribosomal subunit protein uS3c (rps3) from Phaseolus angularis (Azuki bean).